The sequence spans 1363 residues: Xanthine dehydrogenase (1363 aa).

The 2Fe-2S ferredoxin-type domain maps to 35 to 121; the sequence is DTIRFYLNGT…GKHVITVEGI (87 aa). 8 residues coordinate [2Fe-2S] cluster: Cys-73, Cys-78, Cys-81, Cys-103, Cys-142, Cys-145, Cys-177, and Cys-179. Residues 266-450 enclose the FAD-binding PCMH-type domain; sequence FGNKRKKWYR…SSLRIPTASE (185 aa). FAD-binding positions include 294-301, Phe-374, 384-388, Asp-397, and Lys-459; these read LIGGSTET and SPAGN. Mo-molybdopterin is bound by residues Gln-798 and Phe-829. 2 residues coordinate substrate: Glu-833 and Arg-911. Arg-943 contributes to the Mo-molybdopterin binding site. Residues Phe-945 and Thr-1041 each coordinate substrate. Ala-1110 lines the Mo-molybdopterin pocket. The Proton acceptor role is filled by Glu-1295.

Belongs to the xanthine dehydrogenase family. FAD is required as a cofactor. Mo-molybdopterin serves as cofactor. The cofactor is [2Fe-2S] cluster.

The protein localises to the peroxisome. The catalysed reaction is xanthine + NAD(+) + H2O = urate + NADH + H(+). It carries out the reaction hypoxanthine + NAD(+) + H2O = xanthine + NADH + H(+). Its function is as follows. Key enzyme in purine degradation. Catalyzes the oxidation of hypoxanthine to xanthine. Catalyzes the oxidation of xanthine to uric acid. The polypeptide is Xanthine dehydrogenase (hxA) (Emericella nidulans (strain FGSC A4 / ATCC 38163 / CBS 112.46 / NRRL 194 / M139) (Aspergillus nidulans)).